The chain runs to 447 residues: Multidrug efflux pump SdrM (447 aa).

A run of 14 helical transmembrane segments spans residues 6–26 (IITV…SSII), 42–62 (LISL…PIVG), 70–90 (IIYV…MCGL), 94–114 (FTML…LMSL), 134–154 (IVGS…GGIL), 161–181 (WLFY…IWTF), 194–214 (FDTK…FALL), 217–237 (QLLL…MCLF), 260–280 (VFIT…YIPV), 286–306 (LGLS…AWIT), 323–342 (IYLL…SFGI), 346–363 (VLIA…GYIY), 392–412 (LGAS…SGIF), and 418–438 (NVLS…VVFF).

The protein belongs to the major facilitator superfamily.

It is found in the cell membrane. Its function is as follows. Energy-dependent drug efflux pump that increases resistance to antimicrobial agents such as norfloxacin, acriflavine and ethidium bromide. In Staphylococcus aureus (strain N315), this protein is Multidrug efflux pump SdrM.